Here is a 352-residue protein sequence, read N- to C-terminus: MEIVINNISGLNNSFNNNNNSNNNDENEINFNLIKESIVNFKLWDINNKQIEYVCRLGSGSLCRVYKGRLNGKPVAIKVFSPIRFEEFKTEFLMMQSLRSSPFLISFYGVSIVEEPQKQCYCIITEFCSRDSLYHIMTDRLIEIGWNRFFQFSMQIILGLQSLHNRKPKPIVHRDVTSLNILVNEDWECKISNFSASRFNCLNTEYINSNNQNKSFAFCSPESSDFQDIDDDYTSLSSSITSKSDIYSFGIIMFELISRIINGEYSHPFSEFKDIKNDFQLLLSSKNGLRPSLPNICPEPLEKLYKQCVDQSPLNRPSCEEVIISLNQIRSFYLLPQTKKSWDNLVLKNKCK.

In terms of domain architecture, Protein kinase spans 51–333 (IEYVCRLGSG…ISLNQIRSFY (283 aa)). Residues 57 to 65 (LGSGSLCRV) and Lys-78 contribute to the ATP site. The active-site Proton acceptor is the Asp-175.

Belongs to the protein kinase superfamily. TKL Tyr protein kinase family.

The catalysed reaction is L-tyrosyl-[protein] + ATP = O-phospho-L-tyrosyl-[protein] + ADP + H(+). This is Probable tyrosine-protein kinase DDB_G0290471 from Dictyostelium discoideum (Social amoeba).